Here is a 175-residue protein sequence, read N- to C-terminus: Inorganic pyrophosphatase (175 aa).

Substrate is bound by residues K29, R43, and Y55. Residues D65, D70, and D102 each contribute to the Mg(2+) site. A substrate-binding site is contributed by Y141.

This sequence belongs to the PPase family. Homohexamer. It depends on Mg(2+) as a cofactor.

It localises to the cytoplasm. It catalyses the reaction diphosphate + H2O = 2 phosphate + H(+). Functionally, catalyzes the hydrolysis of inorganic pyrophosphate (PPi) forming two phosphate ions. The chain is Inorganic pyrophosphatase from Rickettsia bellii (strain RML369-C).